A 115-amino-acid polypeptide reads, in one-letter code: Ribonuclease P protein component (115 aa).

This sequence belongs to the RnpA family. Consists of a catalytic RNA component (M1 or rnpB) and a protein subunit.

It catalyses the reaction Endonucleolytic cleavage of RNA, removing 5'-extranucleotides from tRNA precursor.. Its function is as follows. RNaseP catalyzes the removal of the 5'-leader sequence from pre-tRNA to produce the mature 5'-terminus. It can also cleave other RNA substrates such as 4.5S RNA. The protein component plays an auxiliary but essential role in vivo by binding to the 5'-leader sequence and broadening the substrate specificity of the ribozyme. This Phytoplasma australiense protein is Ribonuclease P protein component.